The following is a 712-amino-acid chain: Eukaryotic translation initiation factor 3 subunit B (712 aa).

Position 1 is an N-acetylmethionine (M1). Residues 56-143 (NIIVVDHLPV…HIFAVNMFDD (88 aa)) enclose the RRM domain.

It belongs to the eIF-3 subunit B family. Component of the eukaryotic translation initiation factor 3 (eIF-3) complex, which is composed of at least 13 different subunits. Binds to the translation initiation factor TIF3H1.

Its subcellular location is the cytoplasm. In terms of biological role, RNA-binding component of the eukaryotic translation initiation factor 3 (eIF-3) complex, which is involved in protein synthesis of a specialized repertoire of mRNAs and, together with other initiation factors, stimulates binding of mRNA and methionyl-tRNAi to the 40S ribosome. The eIF-3 complex specifically targets and initiates translation of a subset of mRNAs involved in cell proliferation. This Arabidopsis thaliana (Mouse-ear cress) protein is Eukaryotic translation initiation factor 3 subunit B (TIF3B1).